The following is a 292-amino-acid chain: Tetratricopeptide repeat protein 1 (292 aa).

2 stretches are compositionally biased toward basic and acidic residues: residues 1 to 12 (MEEKSEDCKVPE) and 47 to 64 (KAAEAHPQDDHVEEECFH). The interval 1–125 (MEEKSEDCKV…SAKLKEEGNE (125 aa)) is disordered. Acidic residues predominate over residues 88–98 (SSSELDEEYLI). Ser90 carries the post-translational modification Phosphoserine. Basic and acidic residues predominate over residues 99–125 (ELEKNMPEEEKQKRREESAKLKEEGNE). 3 TPR repeats span residues 116–149 (SAKLKEEGNERFKRGDYMEAESSYSQALQMCPAC), 155–188 (SVLFSNRAAARMKQDKKETAITDCSKAIQLNPTY), and 189–222 (IRAILRRAELYEKTDKLDEALEDYKSVLEKDPSV).

In terms of assembly, interacts with the GAP domain of NF1. Interacts (via TPR repeats) with HSP90AA1 and HSPA8.

This Mus musculus (Mouse) protein is Tetratricopeptide repeat protein 1 (Ttc1).